The primary structure comprises 419 residues: Acetylornithine aminotransferase (419 aa).

Residues 116–117 (GA) and Phe-149 each bind pyridoxal 5'-phosphate. Arg-152 contacts N(2)-acetyl-L-ornithine. 240 to 243 (DEVQ) serves as a coordination point for pyridoxal 5'-phosphate. Residue Lys-269 is modified to N6-(pyridoxal phosphate)lysine. A N(2)-acetyl-L-ornithine-binding site is contributed by Ser-296. Thr-297 serves as a coordination point for pyridoxal 5'-phosphate.

The protein belongs to the class-III pyridoxal-phosphate-dependent aminotransferase family. ArgD subfamily. As to quaternary structure, homodimer. Pyridoxal 5'-phosphate is required as a cofactor.

The protein localises to the cytoplasm. The catalysed reaction is N(2)-acetyl-L-ornithine + 2-oxoglutarate = N-acetyl-L-glutamate 5-semialdehyde + L-glutamate. Its pathway is amino-acid biosynthesis; L-arginine biosynthesis; N(2)-acetyl-L-ornithine from L-glutamate: step 4/4. The sequence is that of Acetylornithine aminotransferase from Prochlorococcus marinus (strain SARG / CCMP1375 / SS120).